The following is a 651-amino-acid chain: Coronin-like protein (651 aa).

WD repeat units follow at residues 79–110, 138–169, 180–210, and 226–257; these read GHTAQVLDTDFDPFNDHRIASGSDDSKIGIWD, GHARKVGHVLYHPVAENVLASSSGDYTVKLWN, KHPDMVTSMSFSYDGNYLATVARDKKLRVWN, and AKNQRVVWLGNSDRLATTGFSKLSDRQIGIWD. The segment at 408 to 609 is disordered; the sequence is APSFHEAKRP…TSPKSLGLKK (202 aa). Over residues 427–451 the composition is skewed to basic and acidic residues; sequence LEEKKEQPKVEKPISESEKEVKQEA. 3 positions are modified to phosphoserine: serine 441, serine 454, and serine 456. Residues 452–465 show a composition bias toward low complexity; it reads PKSPSPLKSASSSS. Phosphothreonine is present on residues threonine 517 and threonine 529. Basic and acidic residues-rich tracts occupy residues 523-540 and 547-572; these read ETKKDRTPKVEPSKELKP and TDRKQEQSLPQEEKSSEKTKSPEQEK. 2 positions are modified to phosphoserine: serine 573 and serine 579. Residues 578-590 show a composition bias toward low complexity; sequence SSITAAKTAITAS. Residues 618–650 adopt a coiled-coil conformation; it reads VLQLEDVVDKLTKANLDKDERLLKLEQKIGELS.

It belongs to the WD repeat coronin family. Binds to F-actin.

The sequence is that of Coronin-like protein (CRN1) from Saccharomyces cerevisiae (strain ATCC 204508 / S288c) (Baker's yeast).